Reading from the N-terminus, the 337-residue chain is Anthranilate phosphoribosyltransferase (337 aa).

5-phospho-alpha-D-ribose 1-diphosphate contacts are provided by residues glycine 80, 83 to 84 (GD), threonine 88, 90 to 93 (NIST), 108 to 116 (KHGNRSVSS), and serine 120. Glycine 80 serves as a coordination point for anthranilate. Residue serine 92 participates in Mg(2+) binding. Residue asparagine 111 coordinates anthranilate. Arginine 166 serves as a coordination point for anthranilate. Mg(2+)-binding residues include aspartate 225 and glutamate 226.

This sequence belongs to the anthranilate phosphoribosyltransferase family. In terms of assembly, homodimer. Requires Mg(2+) as cofactor.

It catalyses the reaction N-(5-phospho-beta-D-ribosyl)anthranilate + diphosphate = 5-phospho-alpha-D-ribose 1-diphosphate + anthranilate. Its pathway is amino-acid biosynthesis; L-tryptophan biosynthesis; L-tryptophan from chorismate: step 2/5. Catalyzes the transfer of the phosphoribosyl group of 5-phosphorylribose-1-pyrophosphate (PRPP) to anthranilate to yield N-(5'-phosphoribosyl)-anthranilate (PRA). This Syntrophobacter fumaroxidans (strain DSM 10017 / MPOB) protein is Anthranilate phosphoribosyltransferase.